A 147-amino-acid chain; its full sequence is E3 ubiquitin-protein ligase RNF181 homolog (147 aa).

The segment at 70-111 (CSVCKEPAEEGQKYRILPCKHEFHEECILLWLKKTNSCPLCR) adopts an RING-type; atypical zinc-finger fold.

This sequence belongs to the RNF181 family.

The catalysed reaction is S-ubiquitinyl-[E2 ubiquitin-conjugating enzyme]-L-cysteine + [acceptor protein]-L-lysine = [E2 ubiquitin-conjugating enzyme]-L-cysteine + N(6)-ubiquitinyl-[acceptor protein]-L-lysine.. It functions in the pathway protein modification; protein ubiquitination. E3 ubiquitin-protein ligase which accepts ubiquitin from an E2 ubiquitin-conjugating enzyme in the form of a thioester and then directly transfers the ubiquitin to targeted substrates. The polypeptide is E3 ubiquitin-protein ligase RNF181 homolog (Drosophila melanogaster (Fruit fly)).